The sequence spans 370 residues: D-alanine--D-alanine ligase (370 aa).

Residues 144 to 352 (KKIFADAGIP…YSALIERLVD (209 aa)) enclose the ATP-grasp domain. 177 to 232 (EEVLTYPVFVKPANLGSSVGISKATNKKELEDAMTEAFLYDRRVVVEQGVVAREIE) is an ATP binding site. Positions 306, 319, and 321 each coordinate Mg(2+).

It belongs to the D-alanine--D-alanine ligase family. It depends on Mg(2+) as a cofactor. The cofactor is Mn(2+).

It localises to the cytoplasm. The catalysed reaction is 2 D-alanine + ATP = D-alanyl-D-alanine + ADP + phosphate + H(+). It functions in the pathway cell wall biogenesis; peptidoglycan biosynthesis. Cell wall formation. This is D-alanine--D-alanine ligase from Listeria welshimeri serovar 6b (strain ATCC 35897 / DSM 20650 / CCUG 15529 / CIP 8149 / NCTC 11857 / SLCC 5334 / V8).